The following is a 222-amino-acid chain: von Willebrand factor C domain-containing protein 2-like (222 aa).

Residues 1 to 21 (MALHIHEACILLLVIPGLVTS) form the signal peptide. 2 VWFC domains span residues 51–110 (KGCV…PECK) and 114–172 (NFCE…PVCK).

In terms of assembly, peripherally associated with AMPAR complex. AMPAR complex consists of an inner core made of 4 pore-forming GluA/GRIA proteins (GRIA1, GRIA2, GRIA3 and GRIA4) and 4 major auxiliary subunits arranged in a twofold symmetry. One of the two pairs of distinct binding sites is occupied either by CNIH2, CNIH3 or CACNG2, CACNG3. The other harbors CACNG2, CACNG3, CACNG4, CACNG8 or GSG1L. This inner core of AMPAR complex is complemented by outer core constituents binding directly to the GluA/GRIA proteins at sites distinct from the interaction sites of the inner core constituents. Outer core constituents include at least PRRT1, PRRT2, CKAMP44/SHISA9, FRRS1L and NRN1. The proteins of the inner and outer core serve as a platform for other, more peripherally associated AMPAR constituents, including VWC2L. Alone or in combination, these auxiliary subunits control the gating and pharmacology of the AMPAR complex and profoundly impact their biogenesis and protein processing. Predominantly expressed in the brain (at protein level). Also detected in bones, including femur and calvaria, heart, lung and kidney. Isoform 5 is predominant in lung and heart, compared to isoforms 1 and 3. Isoform 4 is expressed in femur and calvaria at higher levels than isoforms 1 and 5. Isoforms 1 and 4 are expressed at higher levels than isoform 5 in kidney and brain.

The protein localises to the secreted. It is found in the synapse. May play a role in neurogenesis. May promote matrix mineralization, but has been shown to weakly, but significantly inhibit BMP2 and BMP6 activity in a preosteoblastic cell line. The polypeptide is von Willebrand factor C domain-containing protein 2-like (Vwc2l) (Mus musculus (Mouse)).